The sequence spans 122 residues: Large ribosomal subunit protein bL19 (122 aa).

This sequence belongs to the bacterial ribosomal protein bL19 family.

This protein is located at the 30S-50S ribosomal subunit interface and may play a role in the structure and function of the aminoacyl-tRNA binding site. This chain is Large ribosomal subunit protein bL19, found in Chlamydia abortus (strain DSM 27085 / S26/3) (Chlamydophila abortus).